A 216-amino-acid chain; its full sequence is Neural cell adhesion molecule L1.2 (216 aa).

Residues 1 to 64 (EFFIHYLRKD…QTAGARVMEV (64 aa)) form the Fibronectin type-III domain. The Extracellular portion of the chain corresponds to 1–73 (EFFIHYLRKD…VKSGFVTESW (73 aa)). N-linked (GlcNAc...) asparagine glycans are attached at residues asparagine 22 and asparagine 46. The chain crosses the membrane as a helical span at residues 74–94 (FIGLISALVLLLLVLLILCFI). At 95 to 216 (KRSKGGKYSV…GLPNSAALLD (122 aa)) the chain is on the cytoplasmic side. Disordered regions lie at residues 127 to 149 (YRSLESDNEEKRTASQPSLCEDS) and 173 to 216 (DESL…ALLD). Basic and acidic residues predominate over residues 128 to 139 (RSLESDNEEKRT).

It belongs to the immunoglobulin superfamily. L1/neurofascin/NgCAM family. In terms of tissue distribution, expressed in many postmitotic neurons in 16-36 hours embryos. Little or no expression in the olfactory placode, the anterior lateral line/acoustic ganglia complex, the posterior lateral line ganglion, late-developing hindbrain neurons and some Rohon-Beard cells in the spinal cord.

The protein resides in the cell membrane. It is found in the cell projection. The protein localises to the growth cone. Functionally, cell adhesion molecule with an important role in the development of the nervous system. Involved in neuron-neuron adhesion, neurite fasciculation, outgrowth of neurites, etc. Binds to axonin on neurons. This Danio rerio (Zebrafish) protein is Neural cell adhesion molecule L1.2 (nadl1.2).